The primary structure comprises 137 residues: Translation initiation factor 2 subunit beta (137 aa).

This sequence belongs to the eIF-2-beta/eIF-5 family. In terms of assembly, heterotrimer composed of an alpha, a beta and a gamma chain.

Its function is as follows. eIF-2 functions in the early steps of protein synthesis by forming a ternary complex with GTP and initiator tRNA. In Archaeoglobus fulgidus (strain ATCC 49558 / DSM 4304 / JCM 9628 / NBRC 100126 / VC-16), this protein is Translation initiation factor 2 subunit beta (eif2b).